A 244-amino-acid polypeptide reads, in one-letter code: Small ribosomal subunit protein uS2 (244 aa).

The protein belongs to the universal ribosomal protein uS2 family.

This chain is Small ribosomal subunit protein uS2, found in Buchnera aphidicola subsp. Schizaphis graminum (strain Sg).